We begin with the raw amino-acid sequence, 482 residues long: Mannan endo-1,4-beta-mannosidase (482 aa).

The N-terminal stretch at 1–21 (MARTLRYLLCGILALAAGSNA) is a signal peptide. One can recognise a CBM6 domain in the interval 42-160 (TTYEAEDAIL…WYLVDSITLT (119 aa)). N-linked (GlcNAc...) asparagine glycans are attached at residues N171 and N300. The GH26 domain maps to 181–474 (ASARALYDYL…YTSDYVLTLD (294 aa)). The active-site Proton donor is E332. E422 functions as the Nucleophile in the catalytic mechanism.

This sequence belongs to the glycosyl hydrolase 26 family.

The protein resides in the secreted. With respect to regulation, the activity is completely impaired by Ag(+), partially inhibited by Zn(2+), and enhanced by Co(2+), Ni(2+) and Cu(2+) by 22.6, 14.5 and 20.8 %, respectively. Ca(2+), Na(+), Mg(2+), Mn(2+), urea and EDTA do not significantly affect the mannanase activity. Its function is as follows. Mannan endo-1,4-beta-mannosidase that exhibits high activity against konjac glucomannan and carob galactomannan, as well as a lower activity toward beta-mannan. Shows no activity against barley beta-glucan, birchwood xylan, and low viscosity carboxymethyl cellulose (CMC). Has the ability to hydrolyze manno-oligosaccharides such as M4 which is degraded slightly to M3 and M1, M5 which is mainly degraded to M4 and M1, and M6 which is mostly hydrolyzed to M4 and M2. Shows no activity toward M2 and M3 manno-oligosaccharides. The sequence is that of Mannan endo-1,4-beta-mannosidase from Thermothelomyces thermophilus (strain ATCC 42464 / BCRC 31852 / DSM 1799) (Sporotrichum thermophile).